The following is a 585-amino-acid chain: Protein FAM83D (585 aa).

The tract at residues 1-296 is DUF1669; sequence MAARFELLDD…LYAQSEPISS (296 aa). S295 carries the post-translational modification Phosphoserine. Disordered stretches follow at residues 334-411 and 425-482; these read LSST…TSSS and AASS…SQGS. A required for interaction with KIF22 and function in chromosome congression region spans residues 337–585; sequence TPRKSNLGPE…RDIALYPPYQ (249 aa). Composition is skewed to basic and acidic residues over residues 347–360 and 369–383; these read EPPK…RPDS and DYFH…DSKV. Polar residues predominate over residues 425-441; sequence AASSQATVWSKSTTTQT. S458 is modified (phosphoserine). The segment covering 458-482 has biased composition (low complexity); it reads SPASKMSVSRSSSVRSSSSVSSQGS. At T511 the chain carries Phosphothreonine.

This sequence belongs to the FAM83 family. Interacts with FBXW7; promotes FBXW7 degradation. May interact with RAF1. Interacts with KIF22; recruits KIF22 to mitotic spindle microtubules. Interacts (via C-terminus) with DYNLL1. Interacts with HMMR. Directly interacts (via DUF1669) with CSNK1A1 and CSNK1A1L. Post-translationally, phosphorylated during mitosis.

The protein resides in the cytoplasm. The protein localises to the cytoskeleton. Its subcellular location is the spindle. It localises to the spindle pole. In terms of biological role, through the degradation of FBXW7, may act indirectly on the expression and downstream signaling of MTOR, JUN and MYC. May play also a role in cell proliferation through activation of the ERK1/ERK2 signaling cascade. May also be important for proper chromosome congression and alignment during mitosis through its interaction with KIF22. This Mus musculus (Mouse) protein is Protein FAM83D.